The sequence spans 1063 residues: Exportin-T (1063 aa).

The protein belongs to the exportin family.

The protein localises to the nucleus. The protein resides in the cytoplasm. TRNA nucleus export receptor which facilitates tRNA translocation across the nuclear pore complex. Involved in pre-tRNA splicing, probably by affecting the interaction of pre-tRNA with splicing endonuclease. The sequence is that of Exportin-T (LOS1) from Kluyveromyces lactis (strain ATCC 8585 / CBS 2359 / DSM 70799 / NBRC 1267 / NRRL Y-1140 / WM37) (Yeast).